A 184-amino-acid polypeptide reads, in one-letter code: Probable RNA 2'-phosphotransferase (184 aa).

Belongs to the KptA/TPT1 family.

Functionally, removes the 2'-phosphate from RNA via an intermediate in which the phosphate is ADP-ribosylated by NAD followed by a presumed transesterification to release the RNA and generate ADP-ribose 1''-2''-cyclic phosphate (APPR&gt;P). May function as an ADP-ribosylase. The chain is Probable RNA 2'-phosphotransferase from Rhizobium johnstonii (strain DSM 114642 / LMG 32736 / 3841) (Rhizobium leguminosarum bv. viciae).